We begin with the raw amino-acid sequence, 145 residues long: Large ribosomal subunit protein mL43 (145 aa).

Belongs to the mitochondrion-specific ribosomal protein mL43 family. As to quaternary structure, component of the mitochondrial large ribosomal subunit (mt-LSU). Mature yeast 74S mitochondrial ribosomes consist of a small (37S) and a large (54S) subunit. The 37S small subunit contains a 15S ribosomal RNA (15S mt-rRNA) and at least 32 different proteins. The 54S large subunit contains a 21S rRNA (21S mt-rRNA) and at least 45 different proteins.

Its subcellular location is the mitochondrion. In terms of biological role, component of the mitochondrial ribosome (mitoribosome), a dedicated translation machinery responsible for the synthesis of mitochondrial genome-encoded proteins, including at least some of the essential transmembrane subunits of the mitochondrial respiratory chain. The mitoribosomes are attached to the mitochondrial inner membrane and translation products are cotranslationally integrated into the membrane. Also has an extraribosomal function, being essential for mitochondrial genome integrity. May interact with MHR1 to take part in the mtDNA repair mechanism. The polypeptide is Large ribosomal subunit protein mL43 (mrpl51) (Schizosaccharomyces pombe (strain 972 / ATCC 24843) (Fission yeast)).